A 906-amino-acid polypeptide reads, in one-letter code: MDKVKIQEIAEEAGLSNGELIEKAKELGFNVKAANSAISMDDAGILVDFAISGTLPKGFKKPGEKPKLKVVKKKTVEKEPETIVEAPVIEKETAPEKTEVIPEETENTVEESTAAETVESEPETAVIEEIETPAETAKEETVEAAPVVKEVKQRKGISVVSKKAESEAEKGTEIEKPKRRTLSRTGIKIVRKAKPAPVRAATRISMGSGAPTPPSKKKVKKGPAEARETGKKIDIFNHDSMSGDIDSGFGEEEVVLLDFSDKNIYEDMMRQEQKRREEAKKREAANGGPAKGRQPFRPQQRRSLKRGGKRKKYTKEESSEVITSVEIPENVRVYEFAEKVNRSVGEVVKVLFALGMMVTKNDFLSKDEIEILAEEFGVEVSTMNPLDELDYVQAYDEVEDTHLEERPPVITIMGHVDHGKTSLLDKIRSAKVADKEAGGITQHVGAYQVEKNGKKITFVDTPGHEAFTEMRARGAQATDIVIIVVAADDGVMPQTKEAIAHTKAAGVPMIIAMNKMDKESANPDNIKSQLAEIDVMAADWGGEYEFVPVSAHTGLGIDDLLETILLQAEMMELKADPTRKAKAVVVESSVEKGFGPVANVIIKNGTLHVGDNVIVGTTYGRIKAIKLDDGSAVKEIGPSTPAAIVGLNEVPGAGEALVAMDTDKEVRELAEKRAEYDRAKQLSKSTKASLDDLSALIAEGQLKSLPVIIKADVQGSLEAIKGSLEKLRNEEVKVNIIHEGVGGVTESDVTLADASEHAVILGFNVRPTGSVKKKAKELGVEVRTYTIIYDLLDDVKALLGGMMSPVIKEEVTGQAEVRETFVVGKVGTIAGCKVSDGVITRNSKARLIRDGVVVYESKISSLKRFNEDAREVKNGYECGIMLENFNDIKEGDVIETFKDVEEQVTL.

3 disordered regions span residues 94–125 (APEK…PETA), 165–232 (ESEA…TGKK), and 270–321 (RQEQ…SSEV). Basic and acidic residues-rich tracts occupy residues 165–176 (ESEAEKGTEIEK), 222–232 (GPAEARETGKK), and 270–284 (RQEQ…KREA). Positions 299-313 (QQRRSLKRGGKRKKY) are enriched in basic residues. Residues 405 to 574 (ERPPVITIMG…LLQAEMMELK (170 aa)) form the tr-type G domain. The segment at 414–421 (GHVDHGKT) is G1. Residue 414 to 421 (GHVDHGKT) participates in GTP binding. Positions 439–443 (GITQH) are G2. Residues 460-463 (DTPG) form a G3 region. GTP-binding positions include 460 to 464 (DTPGH) and 514 to 517 (NKMD). The interval 514 to 517 (NKMD) is G4. The segment at 550–552 (SAH) is G5.

Belongs to the TRAFAC class translation factor GTPase superfamily. Classic translation factor GTPase family. IF-2 subfamily.

Its subcellular location is the cytoplasm. In terms of biological role, one of the essential components for the initiation of protein synthesis. Protects formylmethionyl-tRNA from spontaneous hydrolysis and promotes its binding to the 30S ribosomal subunits. Also involved in the hydrolysis of GTP during the formation of the 70S ribosomal complex. The sequence is that of Translation initiation factor IF-2 from Sulfurovum sp. (strain NBC37-1).